The following is a 155-amino-acid chain: Small ribosomal subunit protein uS7cz/uS7cy (155 aa).

Component of the chloroplast small ribosomal subunit (SSU). Mature 70S chloroplast ribosomes of higher plants consist of a small (30S) and a large (50S) subunit. The 30S small subunit contains 1 molecule of ribosomal RNA (16S rRNA) and 24 different proteins. The 50S large subunit contains 3 rRNA molecules (23S, 5S and 4.5S rRNA) and 33 different proteins.

It is found in the plastid. The protein localises to the chloroplast. In terms of biological role, component of the chloroplast ribosome (chloro-ribosome), a dedicated translation machinery responsible for the synthesis of chloroplast genome-encoded proteins, including proteins of the transcription and translation machinery and components of the photosynthetic apparatus. The protein is Small ribosomal subunit protein uS7cz/uS7cy (rps7-A) of Spinacia oleracea (Spinach).